A 123-amino-acid polypeptide reads, in one-letter code: UPF0295 protein Bcer98_0460 (123 aa).

The next 2 helical transmembrane spans lie at 12–32 (IRTF…LGVF) and 43–63 (FMML…WIGM).

Belongs to the UPF0295 family.

It is found in the cell membrane. In Bacillus cytotoxicus (strain DSM 22905 / CIP 110041 / 391-98 / NVH 391-98), this protein is UPF0295 protein Bcer98_0460.